The sequence spans 557 residues: Inositol-3-phosphate synthase 1 (557 aa).

NAD(+) contacts are provided by Gly67, Gly68, Asn69, Asn70, Asp141, Ser177, Val178, Gln188, Arg191, Thr228, Ala229, Asn230, Thr231, Gly278, Ser279, Asp303, Ser306, Asn337, Asn338, Asp339, and Lys352. Residue Ser279 is modified to Phosphoserine. Ser357 carries the post-translational modification Phosphoserine. NAD(+) contacts are provided by Gly390, Asp391, Asp419, and Ser420. A disordered region spans residues 512-557; that stretch reads GPGIKPGEVVATSPLPCKKEPTPATNGCTGDANGHPQAPTPKLSTA. Residue Ser524 is modified to Phosphoserine.

The protein belongs to the myo-inositol 1-phosphate synthase family. The cofactor is NAD(+). As to expression, in testis, it is expressed in Sertoli cells. Highly expressed in 2 types of germ cells, pachytene spermatocytes and round spermatids.

It is found in the cytoplasm. It catalyses the reaction D-glucose 6-phosphate = 1D-myo-inositol 3-phosphate. It participates in polyol metabolism; myo-inositol biosynthesis; myo-inositol from D-glucose 6-phosphate: step 1/2. In terms of biological role, key enzyme in myo-inositol biosynthesis pathway that catalyzes the conversion of glucose 6-phosphate to 1-myo-inositol 1-phosphate in a NAD-dependent manner. Rate-limiting enzyme in the synthesis of all inositol-containing compounds. The polypeptide is Inositol-3-phosphate synthase 1 (Isyna1) (Mus musculus (Mouse)).